The primary structure comprises 1483 residues: Chromosome partition protein MukB (1483 aa).

An ATP-binding site is contributed by 34–41; that stretch reads GGNGAGKS. 2 coiled-coil regions span residues 311–426 and 547–607; these read EMAR…LQRA and GQQV…WLAA. The tract at residues 666–783 is flexible hinge; that stretch reads PGGSEDARLN…KVPLFGRAAR (118 aa). Coiled coils occupy residues 835 to 1115 and 1206 to 1266; these read EAAL…SAKA and DDPV…QAVS. The tract at residues 850–870 is disordered; it reads RELNNHESENQQQRQQYEQAK.

It belongs to the SMC family. MukB subfamily. Homodimerization via its hinge domain. Binds to DNA via its C-terminal region. Interacts, and probably forms a ternary complex, with MukE and MukF via its C-terminal region. The complex formation is stimulated by calcium or magnesium. Interacts with tubulin-related protein FtsZ.

It localises to the cytoplasm. The protein localises to the nucleoid. Functionally, plays a central role in chromosome condensation, segregation and cell cycle progression. Functions as a homodimer, which is essential for chromosome partition. Involved in negative DNA supercoiling in vivo, and by this means organize and compact chromosomes. May achieve or facilitate chromosome segregation by condensation DNA from both sides of a centrally located replisome during cell division. This is Chromosome partition protein MukB from Erwinia tasmaniensis (strain DSM 17950 / CFBP 7177 / CIP 109463 / NCPPB 4357 / Et1/99).